The following is a 287-amino-acid chain: Bifunctional protein FolD (287 aa).

Residues glycine 160–serine 162, serine 189, and isoleucine 230 contribute to the NADP(+) site.

The protein belongs to the tetrahydrofolate dehydrogenase/cyclohydrolase family. In terms of assembly, homodimer.

It catalyses the reaction (6R)-5,10-methylene-5,6,7,8-tetrahydrofolate + NADP(+) = (6R)-5,10-methenyltetrahydrofolate + NADPH. The catalysed reaction is (6R)-5,10-methenyltetrahydrofolate + H2O = (6R)-10-formyltetrahydrofolate + H(+). The protein operates within one-carbon metabolism; tetrahydrofolate interconversion. Its function is as follows. Catalyzes the oxidation of 5,10-methylenetetrahydrofolate to 5,10-methenyltetrahydrofolate and then the hydrolysis of 5,10-methenyltetrahydrofolate to 10-formyltetrahydrofolate. In Chlamydia felis (strain Fe/C-56) (Chlamydophila felis), this protein is Bifunctional protein FolD.